A 148-amino-acid polypeptide reads, in one-letter code: MTPESNLKSLGAKTPYIFEYNSDLLEAFPNPNPNLDPLITLECKEFTSLCPITSQPDFGVIFIRYIPKDKMVESKSLKLYLFSYRNHGSFHESCINTILLDLVQLLEPKYLEVYGDFVSRGGIAIKPFVNYAIKEYQDFKEKRLLDAK.

Residue C50 is the Thioimide intermediate of the active site. Residue D57 is the Proton donor of the active site. Substrate is bound by residues 72–74 (VES) and 91–92 (HE).

This sequence belongs to the GTP cyclohydrolase I family. QueF type 1 subfamily.

The protein resides in the cytoplasm. The enzyme catalyses 7-aminomethyl-7-carbaguanine + 2 NADP(+) = 7-cyano-7-deazaguanine + 2 NADPH + 3 H(+). Its pathway is tRNA modification; tRNA-queuosine biosynthesis. In terms of biological role, catalyzes the NADPH-dependent reduction of 7-cyano-7-deazaguanine (preQ0) to 7-aminomethyl-7-deazaguanine (preQ1). In Helicobacter pylori (strain J99 / ATCC 700824) (Campylobacter pylori J99), this protein is NADPH-dependent 7-cyano-7-deazaguanine reductase.